Here is a 524-residue protein sequence, read N- to C-terminus: Cytochrome P450 monooxygenase drtD (524 aa).

A helical transmembrane segment spans residues 2 to 22; that stretch reads SDTYLVAASGLAVCFFVLYLL. Cysteine 418 is a binding site for heme.

The protein belongs to the cytochrome P450 family. Heme is required as a cofactor.

The protein resides in the membrane. The protein operates within secondary metabolite biosynthesis; terpenoid biosynthesis. Functionally, cytochrome P450 monooxygenase; part of the gene cluster that mediates the biosynthesis of various drimane-type sesquiterpene esters, compounds that exhibit diverse biological activities and are widely present in eukaryotes. The pathway begins with the synthesis of the backbone drimenol by the terpene cyclase drtB using farnesyl pyrophosphate (FPP) as substrate. The cytochrome P450 monooxygenase drtD is then responsible for the hydroxylations at C-6, C-9 and C-12, as well as the oxidation of hydroxyl groups at C-6 and C-11 to a ketone and an aldehyde, respectively. Then, the biosynthesis can go in two directions, either the hydroxylated drimenol is further hydroxylated at C-2 and C-3 by an enzyme(s) not associated with the drt cluster, or the FAD-binding oxidoreductase drtC further oxidizes C-11 or C-12 to form the butyrolactone ring. DrtB, drtD and drtC are solely responsible for the formation of the different drimane structures observed during drimane sesquiterpenes biosynthesis. The polyketide synthase drtA synthesizes different lengths (C6 and C8) of PKS chains, which are then oxidized to varying degrees by the short-chain dehydrogenase drtF. Finally, these PKS chains are transferred onto drimane sesquiterpenes by the acyltransferase drtE, forming the sesquiterpene esters. In addition to the different fatty acyl-CoA chains produced by drtA, drtE is also able to use cinnamoyl-CoA as a substrate. This chain is Cytochrome P450 monooxygenase drtD, found in Aspergillus calidoustus.